The primary structure comprises 181 residues: Ribonuclease HII (181 aa).

Residues 1–181 (MICGIDEVGR…SLHRRNFKLI (181 aa)) enclose the RNase H type-2 domain. A divalent metal cation-binding residues include D6, E7, and D98.

Belongs to the RNase HII family. Mn(2+) serves as cofactor. Mg(2+) is required as a cofactor.

Its subcellular location is the cytoplasm. The catalysed reaction is Endonucleolytic cleavage to 5'-phosphomonoester.. Its function is as follows. Endonuclease that specifically degrades the RNA of RNA-DNA hybrids. The polypeptide is Ribonuclease HII (Borrelia garinii subsp. bavariensis (strain ATCC BAA-2496 / DSM 23469 / PBi) (Borreliella bavariensis)).